The primary structure comprises 273 residues: Shikimate dehydrogenase (NADP(+)) (273 aa).

Shikimate is bound by residues 14 to 16 (SKS) and threonine 61. Lysine 65 acts as the Proton acceptor in catalysis. Glutamate 77 contributes to the NADP(+) binding site. Positions 86 and 102 each coordinate shikimate. Residues 126-130 (GAGGA), 150-155 (NRTLSK), and methionine 214 each bind NADP(+). Tyrosine 216 provides a ligand contact to shikimate. Glycine 238 is a binding site for NADP(+).

This sequence belongs to the shikimate dehydrogenase family. In terms of assembly, homodimer.

The enzyme catalyses shikimate + NADP(+) = 3-dehydroshikimate + NADPH + H(+). It functions in the pathway metabolic intermediate biosynthesis; chorismate biosynthesis; chorismate from D-erythrose 4-phosphate and phosphoenolpyruvate: step 4/7. Involved in the biosynthesis of the chorismate, which leads to the biosynthesis of aromatic amino acids. Catalyzes the reversible NADPH linked reduction of 3-dehydroshikimate (DHSA) to yield shikimate (SA). This chain is Shikimate dehydrogenase (NADP(+)), found in Photobacterium profundum (strain SS9).